Reading from the N-terminus, the 735-residue chain is Receptor-type guanylate cyclase gcy-27 (735 aa).

N-linked (GlcNAc...) asparagine glycosylation is present at Asn-11. Residues 28 to 48 traverse the membrane as a helical segment; that stretch reads FIICTLPVPIYFVVVAIWTIN. The Protein kinase domain maps to 188 to 465; sequence ALTSRRRVFG…IENLRNAIAI (278 aa). Residues 538–668 enclose the Guanylate cyclase domain; it reads TVMFVQICDF…DTVNFASRMQ (131 aa).

The protein belongs to the adenylyl cyclase class-4/guanylyl cyclase family. As to expression, expressed bilaterally in ASK, ASI and ASJ sensory neurons.

It localises to the cell membrane. The catalysed reaction is GTP = 3',5'-cyclic GMP + diphosphate. Guanylate cyclase involved in the production of the second messenger cGMP. May be involved in sensitivity to quinine by regulating egl-4 activity through the production of cGMP. Promotes the calcium flux to the cytoplasm in ASJ sensory neurons upon removal of a nitric oxide (NO) stimulus and is thereby involved in the behavioral avoidance response to NO-producing organisms like P.aeruginosa. This is Receptor-type guanylate cyclase gcy-27 from Caenorhabditis elegans.